We begin with the raw amino-acid sequence, 140 residues long: Ig heavy chain V region 93G7 (140 aa).

The first 19 residues, 1–19 (MGWSFIFLFLLSVTAGVHS), serve as a signal peptide directing secretion. The Ig-like domain occupies 20–139 (EVQLQQSGAE…WGQGTPLTVS (120 aa)).

This is Ig heavy chain V region 93G7 from Mus musculus (Mouse).